The sequence spans 711 residues: RB-associated KRAB zinc finger protein (711 aa).

Residues 8–79 (LSFKDVAVAF…EGDRHAQRHL (72 aa)) form the KRAB domain. Glycyl lysine isopeptide (Lys-Gly) (interchain with G-Cter in SUMO2) cross-links involve residues lysine 97 and lysine 256. Residues 170–257 (AYGESLEDFN…YPRSQMELKP (88 aa)) form a required for interaction with RB1 region. C2H2-type zinc fingers lie at residues 258-280 (FECT…QRAH) and 286-308 (YACS…RRSH). Residue lysine 312 forms a Glycyl lysine isopeptide (Lys-Gly) (interchain with G-Cter in SUMO2) linkage. C2H2-type zinc fingers lie at residues 314 to 336 (YKCN…QRTH), 342 to 364 (YECS…QRNH), 370 to 392 (YPCN…QRTH), 398 to 420 (YKCN…QRTH), 426 to 448 (YQCS…YRSH), and 454 to 476 (YECT…WKVH). A Glycyl lysine isopeptide (Lys-Gly) (interchain with G-Cter in SUMO2) cross-link involves residue lysine 354. The interval 414–711 (ITHQRTHTGE…TVNVLTVEKL (298 aa)) is interaction with AR. The C2H2-type 9; degenerate zinc finger occupies 508–530 (YECNECGKTFLDSSAFHRHQSVP). Lysine 534 is covalently cross-linked (Glycyl lysine isopeptide (Lys-Gly) (interchain with G-Cter in SUMO2)). C2H2-type zinc fingers lie at residues 536–558 (YECN…YRGH), 564–586 (FGCS…QRVH), 592–614 (YECY…HRIH), 620–642 (YECS…YRSH), 648–670 (YECN…YRTH), and 676–698 (YECN…QRIH).

This sequence belongs to the krueppel C2H2-type zinc-finger protein family. In terms of assembly, interacts with AR. May also interact with other nuclear hormone receptors such as NR3C1/GR. Interacts with RB1.

It is found in the nucleus. May repress E2F-dependent transcription. May promote AR-dependent transcription. This is RB-associated KRAB zinc finger protein (Rbak) from Mus musculus (Mouse).